Here is a 103-residue protein sequence, read N- to C-terminus: Large ribosomal subunit protein bL28 (103 aa).

The protein belongs to the bacterial ribosomal protein bL28 family.

The polypeptide is Large ribosomal subunit protein bL28 (Anaplasma phagocytophilum (strain HZ)).